The chain runs to 618 residues: Glycine--tRNA ligase 2 (618 aa).

Glu187 is a binding site for glycine. ATP-binding positions include 219-221 and 230-231; these read RNE and RV. Glycine is bound at residue Glu238. 347–348 contacts ATP; that stretch reads EC. Residue 466–468 coordinates glycine; it reads EPS. Position 473 (Arg473) interacts with ATP.

It belongs to the class-II aminoacyl-tRNA synthetase family. In terms of assembly, homodimer.

Its subcellular location is the cytoplasm. It carries out the reaction tRNA(Gly) + glycine + ATP = glycyl-tRNA(Gly) + AMP + diphosphate. It catalyses the reaction 2 ATP + H(+) = P(1),P(4)-bis(5'-adenosyl) tetraphosphate + diphosphate. In terms of biological role, catalyzes the ATP-dependent ligation of glycine to the 3'-end of its cognate tRNA, via the formation of an aminoacyl-adenylate intermediate (Gly-AMP). Also produces diadenosine tetraphosphate (Ap4A), a universal pleiotropic signaling molecule needed for cell regulation pathways, by direct condensation of 2 ATPs. Thereby, may play a special role in Ap4A homeostasis. The sequence is that of Glycine--tRNA ligase 2 (GRS2) from Saccharomyces cerevisiae (strain ATCC 204508 / S288c) (Baker's yeast).